The following is a 1534-amino-acid chain: Dicer-like protein 2 (1534 aa).

The span at 1 to 10 (MDQDPRKDNP) shows a compositional bias: basic and acidic residues. The interval 1-36 (MDQDPRKDNPVEMDVDRDDSSQDPDDNESFKSALDE) is disordered. Acidic residues predominate over residues 11–27 (VEMDVDRDDSSQDPDDN). One can recognise a Helicase ATP-binding domain in the interval 65–249 (TPAALTARAY…IEKLEQVLDA (185 aa)). ATP is bound at residue 78–85 (MFEASLKQ). Positions 192 to 195 (DEAH) match the DEAH box motif. The region spanning 404–575 (KVQTLLKVLA…NAELELLDDP (172 aa)) is the Helicase C-terminal domain. In terms of domain architecture, Dicer dsRNA-binding fold spans 597 to 700 (ARSHLNHFCA…LPTKVSDFLA (104 aa)). 2 RNase III domains span residues 959–1107 (MSLV…MCGG) and 1153–1353 (LEPL…VDSG). Positions 1193, 1339, and 1342 each coordinate Mg(2+). One can recognise a DRBM domain in the interval 1383-1483 (HPNVELQILA…AEKGCLVIKA (101 aa)). Residues 1492–1504 (KAAAKEDKGHNTE) are compositionally biased toward basic and acidic residues. A disordered region spans residues 1492–1534 (KAAAKEDKGHNTENGDANADNGQSGEKEEVPDCRDADGDTVMN). Polar residues predominate over residues 1505-1515 (NGDANADNGQS). The span at 1516–1528 (GEKEEVPDCRDAD) shows a compositional bias: basic and acidic residues.

It belongs to the helicase family. Dicer subfamily. Mg(2+) serves as cofactor. Requires Mn(2+) as cofactor.

Functionally, dicer-like endonuclease involved in cleaving double-stranded RNA in the RNA interference (RNAi) pathway. Produces 21 to 25 bp dsRNAs (siRNAs) which target the selective destruction of homologous RNAs leading to sequence-specific suppression of gene expression, called post-transcriptional gene silencing (PTGS). Part of a broad host defense response against viral infection and transposons. Controls the expression of the non-LTR retrotransposon Tad in the African strain, Adiomopoume. This is Dicer-like protein 2 (dcl-2) from Neurospora crassa (strain ATCC 24698 / 74-OR23-1A / CBS 708.71 / DSM 1257 / FGSC 987).